The following is a 728-amino-acid chain: Polyphosphate kinase (728 aa).

An ATP-binding site is contributed by asparagine 57. Residues arginine 408 and arginine 438 each contribute to the Mg(2+) site. Histidine 468 serves as the catalytic Phosphohistidine intermediate. ATP contacts are provided by tyrosine 501, arginine 597, and histidine 625. A disordered region spans residues valine 694–valine 728. Over residues glutamine 695–alanine 709 the composition is skewed to low complexity.

Belongs to the polyphosphate kinase 1 (PPK1) family. Mg(2+) serves as cofactor. Post-translationally, an intermediate of this reaction is the autophosphorylated ppk in which a phosphate is covalently linked to a histidine residue through a N-P bond.

It carries out the reaction [phosphate](n) + ATP = [phosphate](n+1) + ADP. In terms of biological role, catalyzes the reversible transfer of the terminal phosphate of ATP to form a long-chain polyphosphate (polyP). The sequence is that of Polyphosphate kinase from Synechocystis sp. (strain ATCC 27184 / PCC 6803 / Kazusa).